The following is a 538-amino-acid chain: Chaperonin GroEL (538 aa).

Residues 29–32 (TLGP), 86–90 (DGTTT), Gly413, 476–478 (NAA), and Asp492 each bind ATP.

This sequence belongs to the chaperonin (HSP60) family. In terms of assembly, forms a cylinder of 14 subunits composed of two heptameric rings stacked back-to-back. Interacts with the co-chaperonin GroES.

The protein localises to the cytoplasm. It catalyses the reaction ATP + H2O + a folded polypeptide = ADP + phosphate + an unfolded polypeptide.. In terms of biological role, together with its co-chaperonin GroES, plays an essential role in assisting protein folding. The GroEL-GroES system forms a nano-cage that allows encapsulation of the non-native substrate proteins and provides a physical environment optimized to promote and accelerate protein folding. The protein is Chaperonin GroEL of Bacillus sp. (strain PS3).